A 337-amino-acid chain; its full sequence is Mitochondrial glutathione transporter SLC25A40 (337 aa).

Solcar repeat units follow at residues 14 to 132 (VTPL…LSTF), 140 to 224 (NETR…LRRW), and 234 to 328 (STFM…GKGF). A run of 6 helical transmembrane segments spans residues 20–40 (MMASCAGAVVTSLMVTPLDVV), 104–124 (LWSGLPPTLVMAVPATVIYFT), 146–166 (IVAGIVARFGAVTMISPLELI), 200–221 (WAPTILRDVPFSAMYWYNYENL), 240–260 (FTAGALSGSFAAVATLPFDVV), and 299–319 (GLFTGLIPRLVKIVPACAIMI).

This sequence belongs to the mitochondrial carrier (TC 2.A.29) family. As to expression, widely expressed at low level.

The protein resides in the mitochondrion inner membrane. It catalyses the reaction glutathione(in) = glutathione(out). Functionally, probable mitochondrial transporter required for glutathione import into mitochondria. Glutathione, which plays key roles in oxidative metabolism, is produced exclusively in the cytosol and is imported in many organelles. Mitochondrial glutathione is required for the activity and stability of proteins containing iron-sulfur clusters, as well as erythropoiesis. The protein is Mitochondrial glutathione transporter SLC25A40 of Rattus norvegicus (Rat).